The sequence spans 319 residues: Telomere-binding protein cav (319 aa).

Residues 107 to 312 (RRKMVQPYPE…SISFQNSGSE (206 aa)) are required for binding to Su(var)205. Disordered regions lie at residues 141-163 (WQKQ…DNEV) and 186-248 (PSDL…PDYY). 2 consecutive short sequence motifs (su(var)205-binding Pro-containing repeat) follow at residues 220–224 (PETQM) and 273–279 (PETEMNE). Over residues 291-311 (SMSIGPSINSDGSISFQNSGS) the composition is skewed to polar residues. The segment at 291 to 319 (SMSIGPSINSDGSISFQNSGSEPIDVDVN) is disordered.

As to quaternary structure, interacts (via C-terminus) with Su(var)205 dimer (via hinge and chromoshadow domain) and with moi to form the terminin, telomere-capping, complex. Interacts with HP6, which is also part of the terminin complex.

The protein localises to the nucleus. The protein resides in the chromosome. It localises to the telomere. Functionally, binds to chromosome ends in a sequence-dependent manner and is required for telomere capping. In Drosophila yakuba (Fruit fly), this protein is Telomere-binding protein cav.